The sequence spans 399 residues: Subtilisin-like protease 4 (399 aa).

Residues 1-19 (MVCLKTLSVFLAAFAVADA) form the signal peptide. A propeptide spanning residues 20–118 (RAVFKTQSNK…VEQDQVVRIS (99 aa)) is cleaved from the precursor. Positions 38-117 (YIVVMKDGVS…YVEQDQVVRI (80 aa)) constitute an Inhibitor I9 domain. In terms of domain architecture, Peptidase S8 spans 128 to 399 (SWGLGRVSHR…NRLLYNGSGQ (272 aa)). Catalysis depends on charge relay system residues Asp160 and His191. Residue Asn252 is glycosylated (N-linked (GlcNAc...) asparagine). Ser346 acts as the Charge relay system in catalysis. Residues 380–392 (AISNPGSGTTNRL) show a composition bias toward polar residues. The disordered stretch occupies residues 380 to 399 (AISNPGSGTTNRLLYNGSGQ). The N-linked (GlcNAc...) asparagine glycan is linked to Asn395.

The protein belongs to the peptidase S8 family.

The protein localises to the secreted. In terms of biological role, secreted subtilisin-like serine protease with keratinolytic activity that contributes to pathogenicity. The protein is Subtilisin-like protease 4 (SUB4) of Arthroderma gypseum (strain ATCC MYA-4604 / CBS 118893) (Microsporum gypseum).